The following is a 244-amino-acid chain: tRNA (guanine-N(1)-)-methyltransferase (244 aa).

Residues Gly112 and 131–136 (LGDFIL) each bind S-adenosyl-L-methionine. The segment at 211–244 (IKRTSDRRPDLLEKWQQEKKPGSREQGSREQGEK) is disordered.

It belongs to the RNA methyltransferase TrmD family. As to quaternary structure, homodimer.

The protein resides in the cytoplasm. It catalyses the reaction guanosine(37) in tRNA + S-adenosyl-L-methionine = N(1)-methylguanosine(37) in tRNA + S-adenosyl-L-homocysteine + H(+). Functionally, specifically methylates guanosine-37 in various tRNAs. In Trichormus variabilis (strain ATCC 29413 / PCC 7937) (Anabaena variabilis), this protein is tRNA (guanine-N(1)-)-methyltransferase.